The primary structure comprises 440 residues: MDMQESQQLGMFGESELMSVGMDTFIHRIDSTEVIYQPRRKRAKLIGKYLMGDLLGEGSYGKVKEMLDSETLCRRAVKILKKKKLRRIPNGEANVKKEIQLLRRLRHKNVIQLVDVLYNEEKQKMYMVMEYCVCGMQEMLDSVPEKRFPVFQAHGYFCQLIDGLEYLHSQGIVHKDIKPGNLLLTTNGTLKISDLGVAEALHPFAEDDTCRTSQGSPAFQPPEIANGLDTFSGFKVDIWSAGVTLYNITTGLYPFEGDNIYKLFENIGKGDFTIPEDCGPPLSDLLRGMLEYDPAKRFSIQQIRQHNWFRKKHAQAETLVPIPPSPETKDKWRSMTAVPYLEDLHGYNEDEDDDLYDIEDDIIYTQDFTVPGQVPEEEAGQNGQSRGRGLPKAICMNGTEPGQLSTKSKAERRASASSNPSRKACSASSKIRKLSTCKQQ.

The 261-residue stretch at 49–309 folds into the Protein kinase domain; sequence YLMGDLLGEG…IQQIRQHNWF (261 aa). Residues 55–63 and K78 contribute to the ATP site; that span reads LGEGSYGKV. D176 functions as the Proton acceptor in the catalytic mechanism. Phosphothreonine; by autocatalysis is present on residues T336 and T365. A disordered region spans residues 370-440; the sequence is VPGQVPEEEA…IRKLSTCKQQ (71 aa). Residues 430-440 show a composition bias toward basic residues; that stretch reads KIRKLSTCKQQ. The residue at position 435 (S435) is a Phosphoserine; by PKA.

The protein belongs to the protein kinase superfamily. CAMK Ser/Thr protein kinase family. LKB1 subfamily. As to quaternary structure, catalytic component of a trimeric complex composed of STK11/LKB1, STRAD (STRADA or STRADB) and CAB39/MO25 (CAB39/MO25alpha or CAB39L/MO25beta). The cofactor is Mg(2+). Mn(2+) is required as a cofactor. Ubiquitously expressed in all tissues tested. High levels were observed in duodenum and skeletal muscle, lower levels in liver and pancreas.

It localises to the nucleus. The protein localises to the cytoplasm. It carries out the reaction L-seryl-[protein] + ATP = O-phospho-L-seryl-[protein] + ADP + H(+). The catalysed reaction is L-threonyl-[protein] + ATP = O-phospho-L-threonyl-[protein] + ADP + H(+). Functionally, tumor suppressor serine/threonine-protein kinase that controls the activity of AMP-activated protein kinase (AMPK) family members, thereby playing a role in various processes such as cell metabolism, cell polarity, apoptosis and DNA damage response. Acts by phosphorylating the T-loop of AMPK family proteins, leading to promote their activity. This chain is Serine/threonine-protein kinase STK11, found in Gallus gallus (Chicken).